The following is a 180-amino-acid chain: Crossover junction endodeoxyribonuclease RuvC (180 aa).

Active-site residues include Asp-7, Glu-66, and Asp-138. Mg(2+) contacts are provided by Asp-7, Glu-66, and Asp-138.

This sequence belongs to the RuvC family. As to quaternary structure, homodimer which binds Holliday junction (HJ) DNA. The HJ becomes 2-fold symmetrical on binding to RuvC with unstacked arms; it has a different conformation from HJ DNA in complex with RuvA. In the full resolvosome a probable DNA-RuvA(4)-RuvB(12)-RuvC(2) complex forms which resolves the HJ. Mg(2+) serves as cofactor.

Its subcellular location is the cytoplasm. The catalysed reaction is Endonucleolytic cleavage at a junction such as a reciprocal single-stranded crossover between two homologous DNA duplexes (Holliday junction).. Functionally, the RuvA-RuvB-RuvC complex processes Holliday junction (HJ) DNA during genetic recombination and DNA repair. Endonuclease that resolves HJ intermediates. Cleaves cruciform DNA by making single-stranded nicks across the HJ at symmetrical positions within the homologous arms, yielding a 5'-phosphate and a 3'-hydroxyl group; requires a central core of homology in the junction. The consensus cleavage sequence is 5'-(A/T)TT(C/G)-3'. Cleavage occurs on the 3'-side of the TT dinucleotide at the point of strand exchange. HJ branch migration catalyzed by RuvA-RuvB allows RuvC to scan DNA until it finds its consensus sequence, where it cleaves and resolves the cruciform DNA. This chain is Crossover junction endodeoxyribonuclease RuvC, found in Paraburkholderia phytofirmans (strain DSM 17436 / LMG 22146 / PsJN) (Burkholderia phytofirmans).